Consider the following 365-residue polypeptide: 3-dehydroquinate synthase (365 aa).

Residues 107–111 (GVIGD), 131–132 (TS), Lys-144, and Lys-153 contribute to the NAD(+) site. Zn(2+)-binding residues include Glu-186, His-251, and His-268.

The protein belongs to the sugar phosphate cyclases superfamily. Dehydroquinate synthase family. Co(2+) serves as cofactor. Requires Zn(2+) as cofactor. NAD(+) is required as a cofactor.

It is found in the cytoplasm. The catalysed reaction is 7-phospho-2-dehydro-3-deoxy-D-arabino-heptonate = 3-dehydroquinate + phosphate. It participates in metabolic intermediate biosynthesis; chorismate biosynthesis; chorismate from D-erythrose 4-phosphate and phosphoenolpyruvate: step 2/7. Functionally, catalyzes the conversion of 3-deoxy-D-arabino-heptulosonate 7-phosphate (DAHP) to dehydroquinate (DHQ). This Crocosphaera subtropica (strain ATCC 51142 / BH68) (Cyanothece sp. (strain ATCC 51142)) protein is 3-dehydroquinate synthase.